The sequence spans 156 residues: MNFNATLFGQTVAFILFVWFCMKFVWPPLMNAIEERQKKIADGLADAGRAAKDLELAQIKATEQLKEAKVTANEIIEQANKRKAQIVEEAKVEAQTERAKIIAQGQAEIENERNRVKDDLRKQVALLAIAGAEKILERTIDPEAHSDIVNKLVAEI.

The helical transmembrane segment at 7–29 threads the bilayer; sequence LFGQTVAFILFVWFCMKFVWPPL.

It belongs to the ATPase B chain family. F-type ATPases have 2 components, F(1) - the catalytic core - and F(0) - the membrane proton channel. F(1) has five subunits: alpha(3), beta(3), gamma(1), delta(1), epsilon(1). F(0) has three main subunits: a(1), b(2) and c(10-14). The alpha and beta chains form an alternating ring which encloses part of the gamma chain. F(1) is attached to F(0) by a central stalk formed by the gamma and epsilon chains, while a peripheral stalk is formed by the delta and b chains.

The protein resides in the cell inner membrane. Functionally, f(1)F(0) ATP synthase produces ATP from ADP in the presence of a proton or sodium gradient. F-type ATPases consist of two structural domains, F(1) containing the extramembraneous catalytic core and F(0) containing the membrane proton channel, linked together by a central stalk and a peripheral stalk. During catalysis, ATP synthesis in the catalytic domain of F(1) is coupled via a rotary mechanism of the central stalk subunits to proton translocation. In terms of biological role, component of the F(0) channel, it forms part of the peripheral stalk, linking F(1) to F(0). The chain is ATP synthase subunit b from Shewanella frigidimarina (strain NCIMB 400).